Reading from the N-terminus, the 141-residue chain is Large ribosomal subunit protein uL11 (141 aa).

It belongs to the universal ribosomal protein uL11 family. Part of the ribosomal stalk of the 50S ribosomal subunit. Interacts with L10 and the large rRNA to form the base of the stalk. L10 forms an elongated spine to which L12 dimers bind in a sequential fashion forming a multimeric L10(L12)X complex. In terms of processing, one or more lysine residues are methylated.

Functionally, forms part of the ribosomal stalk which helps the ribosome interact with GTP-bound translation factors. The chain is Large ribosomal subunit protein uL11 from Streptococcus agalactiae serotype Ia (strain ATCC 27591 / A909 / CDC SS700).